The following is a 243-amino-acid chain: Venom protease (243 aa).

A Peptidase S1 domain is found at 1–243 (VVGGKPAKLG…DSFILPALKK (243 aa)). Cys-34 and Cys-50 form a disulfide bridge. Catalysis depends on charge relay system residues His-49 and Asp-97. 2 disulfides stabilise this stretch: Cys-165-Cys-178 and Cys-189-Cys-217. Ser-193 serves as the catalytic Charge relay system.

Belongs to the peptidase S1 family. Expressed by the venom duct.

The protein localises to the secreted. This chain is Venom protease, found in Bombus pensylvanicus (American bumblebee).